A 392-amino-acid chain; its full sequence is Phosphoglycerate kinase (392 aa).

Residues 21–23 (DLN), Arg36, 59–62 (HLGR), Arg114, and Arg147 contribute to the substrate site. ATP contacts are provided by residues Lys198, Glu320, and 346–349 (GGDT).

This sequence belongs to the phosphoglycerate kinase family. Monomer.

It localises to the cytoplasm. It catalyses the reaction (2R)-3-phosphoglycerate + ATP = (2R)-3-phospho-glyceroyl phosphate + ADP. It participates in carbohydrate degradation; glycolysis; pyruvate from D-glyceraldehyde 3-phosphate: step 2/5. This chain is Phosphoglycerate kinase, found in Nitrosomonas europaea (strain ATCC 19718 / CIP 103999 / KCTC 2705 / NBRC 14298).